A 354-amino-acid polypeptide reads, in one-letter code: DNA integrity scanning protein DisA (354 aa).

Positions 6-144 (DDELKKILKI…GDIKYVLRDS (139 aa)) constitute a DAC domain. Residues Gly-73, Leu-91, and 104 to 108 (TRHRT) contribute to the ATP site.

The protein belongs to the DisA family. As to quaternary structure, homooctamer. Mg(2+) is required as a cofactor.

It carries out the reaction 2 ATP = 3',3'-c-di-AMP + 2 diphosphate. Participates in a DNA-damage check-point that is active prior to asymmetric division when DNA is damaged. DisA forms globular foci that rapidly scan along the chromosomes during sporulation, searching for lesions. When a lesion is present, DisA pauses at the lesion site. This triggers a cellular response that culminates in a temporary block in sporulation initiation. Its function is as follows. Also has diadenylate cyclase activity, catalyzing the condensation of 2 ATP molecules into cyclic di-AMP (c-di-AMP). c-di-AMP acts as a signaling molecule that couples DNA integrity with progression of sporulation. The rise in c-di-AMP level generated by DisA while scanning the chromosome, operates as a positive signal that advances sporulation; upon encountering a lesion, the DisA focus arrests at the damaged site and halts c-di-AMP synthesis. The protein is DNA integrity scanning protein DisA of Clostridium perfringens (strain 13 / Type A).